Consider the following 263-residue polypeptide: Shikimate dehydrogenase (NADP(+)) (263 aa).

Shikimate-binding positions include 14 to 16 (SLS) and Thr60. Lys64 functions as the Proton acceptor in the catalytic mechanism. 2 residues coordinate shikimate: Asn85 and Asp100. NADP(+) contacts are provided by residues 123-127 (GAGGA), 146-151 (NRTPQR), and Leu205. Residue Tyr207 coordinates shikimate. Gly228 provides a ligand contact to NADP(+). Gln235 serves as a coordination point for shikimate.

The protein belongs to the shikimate dehydrogenase family. Homodimer.

It catalyses the reaction shikimate + NADP(+) = 3-dehydroshikimate + NADPH + H(+). It participates in metabolic intermediate biosynthesis; chorismate biosynthesis; chorismate from D-erythrose 4-phosphate and phosphoenolpyruvate: step 4/7. Functionally, involved in the biosynthesis of the chorismate, which leads to the biosynthesis of aromatic amino acids. Catalyzes the reversible NADPH linked reduction of 3-dehydroshikimate (DHSA) to yield shikimate (SA). This is Shikimate dehydrogenase (NADP(+)) from Thermus thermophilus (strain ATCC 27634 / DSM 579 / HB8).